The sequence spans 344 residues: L-erythro-3,5-diaminohexanoate dehydrogenase (344 aa).

Belongs to the KDD family. Homodimer.

It carries out the reaction (3S,5S)-3,5-diaminohexanoate + NAD(+) + H2O = (5S)-5-amino-3-oxohexanoate + NH4(+) + NADH + H(+). It participates in amino-acid degradation; L-lysine degradation via acetate pathway. Functionally, involved in the anaerobic fermentation of lysine. Catalyzes the oxidative deamination of L-erythro-3,5-diaminohexanoate (3,5-DAH) to 3-keto-5-aminohexanoate (KAH). The protein is L-erythro-3,5-diaminohexanoate dehydrogenase of Acetoanaerobium sticklandii (strain ATCC 12662 / DSM 519 / JCM 1433 / CCUG 9281 / NCIMB 10654 / HF) (Clostridium sticklandii).